The primary structure comprises 443 residues: Glutamyl-tRNA reductase (443 aa).

Residues 49–52, Ser109, 114–116, and Gln120 contribute to the substrate site; these read TCNR and ETQ. The active-site Nucleophile is Cys50. 189-194 provides a ligand contact to NADP(+); the sequence is GAGKMS.

The protein belongs to the glutamyl-tRNA reductase family. In terms of assembly, homodimer.

It carries out the reaction (S)-4-amino-5-oxopentanoate + tRNA(Glu) + NADP(+) = L-glutamyl-tRNA(Glu) + NADPH + H(+). Its pathway is porphyrin-containing compound metabolism; protoporphyrin-IX biosynthesis; 5-aminolevulinate from L-glutamyl-tRNA(Glu): step 1/2. Its function is as follows. Catalyzes the NADPH-dependent reduction of glutamyl-tRNA(Glu) to glutamate 1-semialdehyde (GSA). The chain is Glutamyl-tRNA reductase from Heliobacterium mobile (Heliobacillus mobilis).